Reading from the N-terminus, the 379-residue chain is Cytochrome b (379 aa).

4 consecutive transmembrane segments (helical) span residues 33-53 (FGSL…FLAM), 77-98 (WLIR…FIHV), 113-133 (WNIG…GYVL), and 178-198 (FFAF…VHLL). Heme b contacts are provided by His-83 and His-97. His-182 and His-196 together coordinate heme b. Residue His-201 participates in a ubiquinone binding. Helical transmembrane passes span 226–246 (TKDL…ALFF), 288–308 (LGGV…PLLN), 320–340 (VTQV…WIGG), and 347–367 (FTTI…ILIP).

It belongs to the cytochrome b family. As to quaternary structure, the cytochrome bc1 complex contains 11 subunits: 3 respiratory subunits (MT-CYB, CYC1 and UQCRFS1), 2 core proteins (UQCRC1 and UQCRC2) and 6 low-molecular weight proteins (UQCRH/QCR6, UQCRB/QCR7, UQCRQ/QCR8, UQCR10/QCR9, UQCR11/QCR10 and a cleavage product of UQCRFS1). This cytochrome bc1 complex then forms a dimer. The cofactor is heme b.

Its subcellular location is the mitochondrion inner membrane. In terms of biological role, component of the ubiquinol-cytochrome c reductase complex (complex III or cytochrome b-c1 complex) that is part of the mitochondrial respiratory chain. The b-c1 complex mediates electron transfer from ubiquinol to cytochrome c. Contributes to the generation of a proton gradient across the mitochondrial membrane that is then used for ATP synthesis. The chain is Cytochrome b (MT-CYB) from Akodon montensis (Montane grass mouse).